A 296-amino-acid polypeptide reads, in one-letter code: MQDRFIRSITQLPLPLADALIPLLHQNFAGHIDAMQLAKLTLASKMTEAEVLLALLPIAAALAKPPISEFYVGAIAKGKSGDIYMGANLELPGEALFHSVHAEQSAISHAWLSGESQIVDIIVNASPCGHCRQFMNELVDGANITIHLPAQESHSLAYYLPYAFGPKDLNVVSPLLAKQQTEFVLDSSDPMIIEGLDHAGLSYAPYTQSFAAVVLETHDGATYCGRYAENAAFNPSMLPMQMALSNLTRHNREFSDIRRAVLIESSQGKISLVGATMDALHTIAAVELEHIVVDPV.

2 consecutive CMP/dCMP-type deaminase domains span residues 47 to 167 (TEAE…FGPK) and 186 to 296 (DSSD…VDPV). 88-90 (NLE) provides a ligand contact to substrate. Residue H101 coordinates Zn(2+). E103 acts as the Proton donor in catalysis. Residues C128 and C131 each coordinate Zn(2+).

This sequence belongs to the cytidine and deoxycytidylate deaminase family. As to quaternary structure, homodimer. The cofactor is Zn(2+).

The enzyme catalyses cytidine + H2O + H(+) = uridine + NH4(+). It carries out the reaction 2'-deoxycytidine + H2O + H(+) = 2'-deoxyuridine + NH4(+). This enzyme scavenges exogenous and endogenous cytidine and 2'-deoxycytidine for UMP synthesis. This chain is Cytidine deaminase, found in Shewanella sp. (strain W3-18-1).